We begin with the raw amino-acid sequence, 245 residues long: UDP-N-acetyl-D-mannosaminuronic acid transferase (245 aa).

The protein belongs to the glycosyltransferase 26 family.

It catalyses the reaction UDP-N-acetyl-alpha-D-mannosaminouronate + N-acetyl-alpha-D-glucosaminyl-di-trans,octa-cis-undecaprenyl diphosphate = beta-D-ManNAcA-(1-&gt;4)-alpha-D-GlcNAc-di-trans,octa-cis-undecaprenyl diphosphate + UDP + H(+). Its pathway is bacterial outer membrane biogenesis; enterobacterial common antigen biosynthesis. Catalyzes the synthesis of Und-PP-GlcNAc-ManNAcA (Lipid II), the second lipid-linked intermediate involved in enterobacterial common antigen (ECA) synthesis. The sequence is that of UDP-N-acetyl-D-mannosaminuronic acid transferase from Proteus mirabilis (strain HI4320).